The sequence spans 634 residues: DNA-directed RNA polymerase subunit gamma (634 aa).

Cysteine 74, cysteine 76, cysteine 89, and cysteine 92 together coordinate Zn(2+). Residues aspartate 471, aspartate 473, and aspartate 475 each coordinate Mg(2+).

It belongs to the RNA polymerase beta' chain family. RpoC1 subfamily. In terms of assembly, in cyanobacteria the RNAP catalytic core is composed of 2 alpha, 1 beta, 1 beta', 1 gamma and 1 omega subunit. When a sigma factor is associated with the core the holoenzyme is formed, which can initiate transcription. It depends on Mg(2+) as a cofactor. Zn(2+) is required as a cofactor.

It carries out the reaction RNA(n) + a ribonucleoside 5'-triphosphate = RNA(n+1) + diphosphate. Functionally, DNA-dependent RNA polymerase catalyzes the transcription of DNA into RNA using the four ribonucleoside triphosphates as substrates. This Synechococcus sp. (strain CC9605) protein is DNA-directed RNA polymerase subunit gamma.